Reading from the N-terminus, the 329-residue chain is DNA-directed RNA polymerase subunit alpha (329 aa).

An alpha N-terminal domain (alpha-NTD) region spans residues 1 to 235; that stretch reads MQGSVTEFLK…EQLEAFVDLR (235 aa). The tract at residues 249–329 is alpha C-terminal domain (alpha-CTD); that stretch reads FDPILLRPVD…NWPPASIADE (81 aa).

Belongs to the RNA polymerase alpha chain family. In terms of assembly, homodimer. The RNAP catalytic core consists of 2 alpha, 1 beta, 1 beta' and 1 omega subunit. When a sigma factor is associated with the core the holoenzyme is formed, which can initiate transcription.

It carries out the reaction RNA(n) + a ribonucleoside 5'-triphosphate = RNA(n+1) + diphosphate. In terms of biological role, DNA-dependent RNA polymerase catalyzes the transcription of DNA into RNA using the four ribonucleoside triphosphates as substrates. The protein is DNA-directed RNA polymerase subunit alpha of Yersinia pestis bv. Antiqua (strain Antiqua).